The chain runs to 243 residues: DNA repair protein RecO (243 aa).

It belongs to the RecO family.

Involved in DNA repair and RecF pathway recombination. The sequence is that of DNA repair protein RecO from Phenylobacterium zucineum (strain HLK1).